Reading from the N-terminus, the 773-residue chain is DC-STAMP domain-containing protein 2 (773 aa).

The Cytoplasmic portion of the chain corresponds to 1-26; that stretch reads MPKVMKDVVHPLGGEEPSMARAVVRS. A helical transmembrane segment spans residues 27–47; sequence VGGFTLGLSLATAYGLLELLV. At 48-51 the chain is on the extracellular side; sequence EGHS. Residues 52 to 72 form a helical membrane-spanning segment; it reads PWGCLVGTLTLAAFLSLGMGF. At 73 to 233 the chain is on the cytoplasmic side; that stretch reads SRQVRATVLL…IPQAYHLCYV (161 aa). Residues 234–254 form a helical membrane-spanning segment; that stretch reads LMPFKLALCGLASLVQVFCVI. At 255 to 322 the chain is on the extracellular side; it reads PKYIQPFLRQ…SMKLHRVREA (68 aa). 2 N-linked (GlcNAc...) asparagine glycosylation sites follow: Asn-284 and Asn-296. A helical membrane pass occupies residues 323–343; that stretch reads LALMGFTTPLLLVLLYLQALF. Residues 344-415 are Cytoplasmic-facing; it reads YRYCYLNWDH…ILETFNLIRH (72 aa). The helical transmembrane segment at 416–436 threads the bilayer; the sequence is LLLVLFLVFLDYAVFWVLDLA. Over 437 to 499 the chain is Extracellular; it reads RHQLQGEIVA…LRPSEPDSTG (63 aa). Asn-480 is a glycosylation site (N-linked (GlcNAc...) asparagine). The chain crosses the membrane as a helical span at residues 500–520; it reads YIVIGVMYGLCFFITLFGSYV. At 521–773 the chain is on the cytoplasmic side; sequence SRLRRVICAS…LPDPSHPPPK (253 aa). Residues 692–701 show a composition bias toward low complexity; the sequence is SLSMESTSES. The disordered stretch occupies residues 692 to 773; sequence SLSMESTSES…LPDPSHPPPK (82 aa). A compositionally biased stretch (pro residues) spans 758–773; that stretch reads PLSPPSLPDPSHPPPK.

Interacts with DCST1.

It is found in the cytoplasmic vesicle. Its subcellular location is the secretory vesicle. The protein localises to the acrosome membrane. Functionally, essential sperm cell-surface protein required for sperm-egg fusion and fertilization. This Homo sapiens (Human) protein is DC-STAMP domain-containing protein 2 (DCST2).